The following is a 373-amino-acid chain: Schlafen-like protein 1 (373 aa).

The segment at 1–67 (MAALFEENDS…ELSSEEVDIP (67 aa)) is disordered. The SLFN-like fold stretch occupies residues 247–373 (KAGAKIEFRT…NQVYRLESSV (127 aa)).

This sequence belongs to the Schlafen family. Component of the trimeric PUCH (precursor of 21U RNA 5'-end cleavage holoenzyme) complex; consisting of tofu-1, tofu-2 and either slfl-3 or slfl-4; which is required for processing of piRNA precursors. Within the complex, interacts (via N-terminus) with tofu-2 (via N-terminus); the interaction stabilizes tofu-2 and may form a functional nuclease. Within the complex, required for the interaction of tofu-2 (via N-terminus) with slfl-3 (via N-terminus). Interacts (via residues 82-172) with the PETISCO complex subunit tofu-6 (via residues 120-314); the interaction between the PETISCO and PUCH complex members enhances piRNA production in vivo. In terms of tissue distribution, expressed in the germline.

The protein resides in the cytoplasm. In terms of biological role, component of the trimeric PUCH (precursor of 21U RNA 5'-end cleavage holoenzyme) complex, that acts as an endoribonuclease processing the 5'-end of precursor Piwi-interacting RNAs (piRNAs). The PUCH complex consists of tofu-1, tofu-2 and either slfl-3 or slfl-4, with tofu-2 exhibiting endoribonuclease activity. PUCH-mediated processing strictly requires a 7-methyl-G cap (m7 G-cap) and an uracil at position three (U3). PUCH also exhibits a strict bias for piRNA precursors with an A or G at position 1. Mature piRNA production is enhanced by the interaction of PUCH with the PETISCO complex, which is stabilizing piRNA precursors and allows their processing by PUCH. The polypeptide is Schlafen-like protein 1 (Caenorhabditis elegans).